A 255-amino-acid polypeptide reads, in one-letter code: UPF0246 protein DP0358 (255 aa).

It belongs to the UPF0246 family.

The protein is UPF0246 protein DP0358 of Desulfotalea psychrophila (strain LSv54 / DSM 12343).